Reading from the N-terminus, the 325-residue chain is GTP 3',8-cyclase (325 aa).

The Radical SAM core domain occupies 10–229 (GYGRRINYLR…PSLEKIKSED (220 aa)). Residue Arg-19 coordinates GTP. Cys-26 and Cys-30 together coordinate [4Fe-4S] cluster. Tyr-32 lines the S-adenosyl-L-methionine pocket. Position 33 (Cys-33) interacts with [4Fe-4S] cluster. A GTP-binding site is contributed by Arg-69. S-adenosyl-L-methionine is bound at residue Gly-73. GTP is bound at residue Thr-100. An S-adenosyl-L-methionine-binding site is contributed by Ser-124. Lys-161 lines the GTP pocket. An S-adenosyl-L-methionine-binding site is contributed by Met-195. 2 residues coordinate [4Fe-4S] cluster: Cys-257 and Cys-260. 262–264 (RLR) contacts GTP. Residue Cys-274 coordinates [4Fe-4S] cluster.

Belongs to the radical SAM superfamily. MoaA family. In terms of assembly, monomer and homodimer. [4Fe-4S] cluster serves as cofactor.

The enzyme catalyses GTP + AH2 + S-adenosyl-L-methionine = (8S)-3',8-cyclo-7,8-dihydroguanosine 5'-triphosphate + 5'-deoxyadenosine + L-methionine + A + H(+). Its pathway is cofactor biosynthesis; molybdopterin biosynthesis. Catalyzes the cyclization of GTP to (8S)-3',8-cyclo-7,8-dihydroguanosine 5'-triphosphate. The protein is GTP 3',8-cyclase of Peptoclostridium acidaminophilum (Eubacterium acidaminophilum).